Here is a 1099-residue protein sequence, read N- to C-terminus: MSGPSQDSEPEAKVLHIKRLYRAVVETVHKLDIIISGKSSYREVFKPENISLRNKLRELCVKLMFLHPVDYGRKAEELLWRKVYYEVIQVIKTNKKHIHSRSALECAYRTHLIAGVGFFQHLLLYIQSHYQLELQDCIDWTHVTDPLIGRKKPVSATSKEMEWAQMACHRCLVYLGDLARYQNELAGVEAEQLAERFYHQALSVAPHVGMPFNQLGTLAGSKFYNVEATYYYLRCIQSETPFDGAYGNLKRLFDKASKMYHQVKKQEMKKLSPSRQRSKDIKRLLVSFMYLQSLLQPKNSLMETELTSLCQSVLEDFNLVLFYLPLPAHGSQSASEEEEEHDSVGSVLPDSLIFKMVVICLMVVHSLKRGASKQYSASIAFTLALFSHLVNHVNIRLQAELEEGESDVPALRTDNTDDADARDHSSAALSEERTLQNGSLEEDDDEEEEEKENGEDEPKGNGRTVATKKNQEKKRSAEEKQKQKRKFSRLSMLRRRRCAHKEDESDLSEGFESDEEEEEEEEGGGGGLVDGLGAPRVQMNSLGRDTRKGPLPEDGGWESGSEEDEGGTAFDVETDSDMNSQESRSDLEDMEDAENAPQQPQQEENEQPQTSREENATPPVTNGPSVSNDASISSNLQAMSSQLFQAKRCFRLAPTFSNVLLRPATTTPPAPESNPAPVQEITPPTGETPRNTSPEIANGTNDKDPDSNSEGSEHSNHSFHSEKTLSERLEILTNQGLIQVVKVFLDWLRTNTDIILMCAQSSQSLWNRLSVLLNLLPEGSKILETDIGLNKDVTELLSECEHPSLAQTLLLPEDMALRHLPALSIAHRRLDFTSQRPPLTPLDECVVRVCCIRSFGHFLTNLQGNVLHFNPEAGIFTSISQSEQDNLVQQAKAQFRMAEEEARRNRLMRDMAQLRLQLEVSQLEGSLQQPKAQSSMSPYLVPDTAVLCQHLGLLRQLAASGCFIIIIPRTVIDGLDMLKKENSGARDGIRFLETEFRKGNRYIRCQKESGRSFERDKLKRQDTEAWHLYKMVDSCRQLTGSQSSGDEDTAGMVTILTGHSLEELSERSASMKAAVQAVAAAGMELKNIIEFYRQWKEMG.

Disordered stretches follow at residues 403-631 and 663-722; these read EGES…NDAS and PATT…FHSE. A compositionally biased stretch (basic and acidic residues) spans 419 to 434; sequence ADARDHSSAALSEERT. Residues 440–455 are compositionally biased toward acidic residues; the sequence is LEEDDDEEEEEKENGE. The segment covering 469–481 has biased composition (basic and acidic residues); that stretch reads KNQEKKRSAEEKQ. The segment covering 482 to 499 has biased composition (basic residues); that stretch reads KQKRKFSRLSMLRRRRCA. Composition is skewed to acidic residues over residues 504 to 523 and 560 to 576; these read ESDLSEGFESDEEEEEEEEG and GSEEDEGGTAFDVETDS. Composition is skewed to polar residues over residues 618-631 and 688-700; these read PPVTNGPSVSNDAS and TPRNTSPEIANGT. The span at 701–722 shows a compositional bias: basic and acidic residues; that stretch reads NDKDPDSNSEGSEHSNHSFHSE. Positions 938–1061 constitute a PINc domain; it reads PYLVPDTAVL…MVTILTGHSL (124 aa).

The protein localises to the cytoplasm. Its subcellular location is the nucleus. Its function is as follows. Plays a role in nonsense-mediated mRNA decay. Does not have RNase activity by itself. Promotes dephosphorylation of UPF1. Together with SMG7 is thought to provide a link to the mRNA degradation machinery involving exonucleolytic pathways, and to serve as an adapter for UPF1 to protein phosphatase 2A (PP2A), thereby triggering UPF1 dephosphorylation. Necessary for TERT activity. Required for normal embryonic development. This chain is Nonsense-mediated mRNA decay factor SMG5 (smg5), found in Danio rerio (Zebrafish).